We begin with the raw amino-acid sequence, 188 residues long: UPF0301 protein XC_1365 (188 aa).

It belongs to the UPF0301 (AlgH) family.

The sequence is that of UPF0301 protein XC_1365 from Xanthomonas campestris pv. campestris (strain 8004).